We begin with the raw amino-acid sequence, 209 residues long: Ubiquinone biosynthesis protein COQ4 homolog 2, mitochondrial (209 aa).

Zn(2+) contacts are provided by His118, Asp119, His122, and Glu134.

The protein belongs to the COQ4 family. Component of a multi-subunit COQ enzyme complex. Requires Zn(2+) as cofactor.

Its subcellular location is the mitochondrion inner membrane. The catalysed reaction is a 4-hydroxy-3-methoxy-5-(all-trans-polyprenyl)benzoate + H(+) = a 2-methoxy-6-(all-trans-polyprenyl)phenol + CO2. The protein operates within cofactor biosynthesis; ubiquinone biosynthesis. Its function is as follows. Lyase that catalyzes the C1-decarboxylation of 4-hydroxy-3-methoxy-5-(all-trans-polyprenyl)benzoic acid into 2-methoxy-6-(all-trans-polyprenyl)phenol during ubiquinone biosynthesis. In Paramecium tetraurelia, this protein is Ubiquinone biosynthesis protein COQ4 homolog 2, mitochondrial.